An 89-amino-acid chain; its full sequence is Small ribosomal subunit protein uS15 (89 aa).

The protein belongs to the universal ribosomal protein uS15 family. In terms of assembly, part of the 30S ribosomal subunit. Forms a bridge to the 50S subunit in the 70S ribosome, contacting the 23S rRNA.

Its function is as follows. One of the primary rRNA binding proteins, it binds directly to 16S rRNA where it helps nucleate assembly of the platform of the 30S subunit by binding and bridging several RNA helices of the 16S rRNA. Forms an intersubunit bridge (bridge B4) with the 23S rRNA of the 50S subunit in the ribosome. This chain is Small ribosomal subunit protein uS15, found in Ureaplasma parvum serovar 3 (strain ATCC 27815 / 27 / NCTC 11736).